The following is a 174-amino-acid chain: RxLR effector protein 207 (174 aa).

Positions 1–20 (MSKVFLLLVLSVFALVSCDA) are cleaved as a signal peptide. A RxLR-dEER motif is present at residues 46 to 62 (RMLRAQEEPTNAADEER). The disordered stretch occupies residues 82-99 (VTNSKLVQSMNNKLASLT).

This sequence belongs to the RxLR effector family. In terms of assembly, interacts with Nicotiana benthamiana ACD11, BPA1 (binding partner of ACD11), as well as BPA-like proteins BPL1, BPL2, BPL3 and BPL4.

Its subcellular location is the secreted. The protein localises to the host cell membrane. Functionally, secreted effector that activates ROS-mediated cell death in plant host and is essential for virulence. Plays a role in the transition from the biotrophic to necrotrophic stage. Associates with and promotes the degradation of Nicotiana benthamiana BPA1, BPL1, BPL2, and BPL4 to disrupt ACD11 stabilization in a 26S proteasome-dependent manner. The polypeptide is RxLR effector protein 207 (Phytophthora capsici).